Reading from the N-terminus, the 191-residue chain is MEYFDMRKMSVNLWRNAAGETREICTFPPAKRDFYWRASIASIAANGEFSLFPGMERIVTLLEGGEMLLESADRFNHTLKPLQPFAFTADQVVKAKLTAGQMSMDFNIMTRLDVCKAKVRIAERTFTTFGSRGGVVFVINGAWQLGDKLLTTDQGACWFDGRHTLRLLQPQGKLLFSEINWLAGHSPDQVQ.

The protein belongs to the Ves family.

This is Protein Ves from Shigella flexneri serotype 5b (strain 8401).